Reading from the N-terminus, the 105-residue chain is Heat shock protein HspQ (105 aa).

It belongs to the HspQ family.

The protein resides in the cytoplasm. Functionally, involved in the degradation of certain denaturated proteins, including DnaA, during heat shock stress. The sequence is that of Heat shock protein HspQ from Baumannia cicadellinicola subsp. Homalodisca coagulata.